The primary structure comprises 120 residues: NAD(P)H-quinone oxidoreductase subunit 3 (120 aa).

3 helical membrane-spanning segments follow: residues 10–30, 64–84, and 89–109; these read FLGF…TNLI, MFAL…PWAV, and LGLL…IALA.

This sequence belongs to the complex I subunit 3 family. In terms of assembly, NDH-1 can be composed of about 15 different subunits; different subcomplexes with different compositions have been identified which probably have different functions.

The protein resides in the cellular thylakoid membrane. It catalyses the reaction a plastoquinone + NADH + (n+1) H(+)(in) = a plastoquinol + NAD(+) + n H(+)(out). The catalysed reaction is a plastoquinone + NADPH + (n+1) H(+)(in) = a plastoquinol + NADP(+) + n H(+)(out). In terms of biological role, NDH-1 shuttles electrons from an unknown electron donor, via FMN and iron-sulfur (Fe-S) centers, to quinones in the respiratory and/or the photosynthetic chain. The immediate electron acceptor for the enzyme in this species is believed to be plastoquinone. Couples the redox reaction to proton translocation, and thus conserves the redox energy in a proton gradient. Cyanobacterial NDH-1 also plays a role in inorganic carbon-concentration. The chain is NAD(P)H-quinone oxidoreductase subunit 3 from Prochlorococcus marinus (strain MIT 9301).